A 143-amino-acid polypeptide reads, in one-letter code: EKC/KEOPS complex subunit LAGE3 (143 aa).

The interval 1-57 (MRDADADAGGGADGGDGRGGHSCRGGVDTAAAPAGGAPPAHAPGPGRDAASAARGSR) is disordered. The span at 30 to 55 (AAAPAGGAPPAHAPGPGRDAASAARG) shows a compositional bias: low complexity.

Belongs to the CTAG/PCC1 family. As to quaternary structure, component of the EKC/KEOPS complex composed of at least GON7, TP53RK, TPRKB, OSGEP and LAGE3; the whole complex dimerizes. As to expression, ubiquitous.

The protein resides in the cytoplasm. It localises to the nucleus. Component of the EKC/KEOPS complex that is required for the formation of a threonylcarbamoyl group on adenosine at position 37 (t(6)A37) in tRNAs that read codons beginning with adenine. The complex is probably involved in the transfer of the threonylcarbamoyl moiety of threonylcarbamoyl-AMP (TC-AMP) to the N6 group of A37. LAGE3 functions as a dimerization module for the complex. The protein is EKC/KEOPS complex subunit LAGE3 of Homo sapiens (Human).